The following is a 302-amino-acid chain: Recombination-associated protein RdgC (302 aa).

The protein belongs to the RdgC family.

The protein resides in the cytoplasm. It localises to the nucleoid. Functionally, may be involved in recombination. This is Recombination-associated protein RdgC from Xylella fastidiosa (strain 9a5c).